Here is a 500-residue protein sequence, read N- to C-terminus: Glucose-6-phosphate 1-dehydrogenase (500 aa).

NADP(+)-binding positions include 18–25 (GASGDLSK), R52, and K155. Residues K155, 185 to 189 (HYLGK), E223, and D242 contribute to the D-glucose 6-phosphate site. Catalysis depends on H247, which acts as the Proton acceptor. Residue K338 coordinates NADP(+). K341 serves as a coordination point for D-glucose 6-phosphate. Positions 347, 351, and 373 each coordinate NADP(+). Residue Q375 participates in D-glucose 6-phosphate binding. NADP(+) is bound by residues 381–383 (YFK), 401–403 (DLT), and Y483.

It belongs to the glucose-6-phosphate dehydrogenase family.

The protein localises to the cytoplasm. The protein resides in the cytosol. It carries out the reaction D-glucose 6-phosphate + NADP(+) = 6-phospho-D-glucono-1,5-lactone + NADPH + H(+). The protein operates within carbohydrate degradation; pentose phosphate pathway; D-ribulose 5-phosphate from D-glucose 6-phosphate (oxidative stage): step 1/3. Catalyzes the rate-limiting step of the oxidative pentose-phosphate pathway, which represents a route for the dissimilation of carbohydrates besides glycolysis. The main function of this enzyme is to provide reducing power (NADPH) and pentose phosphates for fatty acid and nucleic acid synthesis. In Schizosaccharomyces pombe (strain 972 / ATCC 24843) (Fission yeast), this protein is Glucose-6-phosphate 1-dehydrogenase.